The primary structure comprises 669 residues: Translation factor GUF1, mitochondrial (669 aa).

The transit peptide at 1–49 (MWTLAGQGWWRGRALAAWVTEAARKGLLWPHLAPARGTAAESRAPDRCY) directs the protein to the mitochondrion. The tr-type G domain maps to 66–247 (ENTRNFSIIA…AVIKRIPFPK (182 aa)). Residues 75–82 (AHVDHGKS), 140–144 (DTPGH), and 194–197 (NKID) contribute to the GTP site.

This sequence belongs to the TRAFAC class translation factor GTPase superfamily. Classic translation factor GTPase family. LepA subfamily.

The protein localises to the mitochondrion inner membrane. It catalyses the reaction GTP + H2O = GDP + phosphate + H(+). In terms of biological role, promotes mitochondrial protein synthesis. May act as a fidelity factor of the translation reaction, by catalyzing a one-codon backward translocation of tRNAs on improperly translocated ribosomes. Binds to mitochondrial ribosomes in a GTP-dependent manner. The chain is Translation factor GUF1, mitochondrial from Bos taurus (Bovine).